The chain runs to 147 residues: 3-hydroxyacyl-[acyl-carrier-protein] dehydratase FabZ (147 aa).

Histidine 49 is an active-site residue.

Belongs to the thioester dehydratase family. FabZ subfamily.

The protein resides in the cytoplasm. The enzyme catalyses a (3R)-hydroxyacyl-[ACP] = a (2E)-enoyl-[ACP] + H2O. Functionally, involved in unsaturated fatty acids biosynthesis. Catalyzes the dehydration of short chain beta-hydroxyacyl-ACPs and long chain saturated and unsaturated beta-hydroxyacyl-ACPs. This Syntrophotalea carbinolica (strain DSM 2380 / NBRC 103641 / GraBd1) (Pelobacter carbinolicus) protein is 3-hydroxyacyl-[acyl-carrier-protein] dehydratase FabZ.